Reading from the N-terminus, the 490-residue chain is AP-5 complex subunit mu-1 (490 aa).

The region spanning 206 to 476 (KPQVSISITE…LISSDYYIWN (271 aa)) is the MHD domain.

Belongs to the adaptor complexes medium subunit family. As to quaternary structure, probably part of the adaptor protein complex 5 (AP-5) a tetramer composed of AP5B1, AP5M1, AP5S1 and AP5Z1. Expressed in various tumor cell lines including Jurkat, Hep-G2 and HeLa.

It localises to the cytoplasm. It is found in the cytosol. The protein localises to the late endosome membrane. The protein resides in the lysosome membrane. In terms of biological role, as part of AP-5, a probable fifth adaptor protein complex it may be involved in endosomal transport. According to PubMed:18395520, it may play a role in cell death. This Homo sapiens (Human) protein is AP-5 complex subunit mu-1 (AP5M1).